Reading from the N-terminus, the 131-residue chain is Spermatocyte protein spe-27 (131 aa).

Residues 1-17 (MNKSLIFLLSFAYSCYS) form the signal peptide.

Functionally, required for spermiogenesis. In Caenorhabditis elegans, this protein is Spermatocyte protein spe-27 (spe-27).